Consider the following 1440-residue polypeptide: MYNPYQQPSYGAPQQPQQTGYGFNATGGNAMPQSQFQSTGYYQQQPTYQQPGFQPQQTGFQPQATGYSVPQTSYQTGFQVQQTGFQPQQTGFQQQSAETNTELKIPNIRLSFITASDQSKFEHLFRTAVRKGETAISGDAARDILLRSGLPPVTLAEIWSLSDTNKSGSLLFPEFALSLHLCNLALKSEPLPSVLPEKWSNEVQSFVDAISFSVPEDPSKILANTPFASLGTEEKTSWMDAPAAPSTSFQPQLTGFQPPQMPAQRTGGQITAQRTGGGSLIPLQPQQTAGLVPAGLQRQNTGYQPPQPLQSQNTGFQSSVGRQNTGYQPPLQQQGTGYQPLKQQNTGYQPPLQQQGTGYQPPLQQQGTGYQPPLQQQGTGYQPLQSQGTGFQSQGTIQPQGTGFQPQSTGFQPQPTGLSSQPTGKPGQWGFVSTPTGGIPGLSAMEQHFLPNTQLSSNNLQNAMGGSLKTNVTWAITKQEKSIYDGIFQAWDKSRQGFIDGETAIGIFGKSGLARPDLETIWNLADGDNKGKLNKDEFSVAMHLVYRRLNGFDLPLRLPPELIPPSKKHIQESMDSLKNSLRGGNNKPKRTQTSSSLYKHDDDDVGYVSTARHRKKSDSSSGSGSGTMSIEQLKKEIREKKILLDAMDSEDRDSSVLSQRDREWNEREIESLKFRILQAHNKLESSGISGSHEEKVQLLDRLRHLTQDKMPKLISNIHVVNNEICSRQMKVAKLRLQKEHPDWAPEASDADIVGTGPNGEVTDYDRKKFKSKQLLKRRMAALSGAKTGSTDTAVDDQLAKATEDAKNLGDQQRKMIEEISGSIKDLEDGCISALQSTTREDSYEKWEKGQGVSSDVAAFIRSLPKSEGSKNGRNEKTQSPYTQPTKSQSQSAQSTQSQSQSTQSVQTQPAQPATYSSYSSPEDRAAYIKAQAEKRMNERLAKLGITRRKETGSKAPEVPKEPVEAPKPQEIETPKETETQRETNTKSTSQTSKAEPQKVSVPPAIPSSSQAPAIPSPAIPPAPEDDSEDEEYAALMKQKQEMEERRLRKKKEKEERLARLKREMEEMNKEEDSDEEPVTSVPTYTNGSVKSSTQPISQSEEVPKTEEEKSGESEQTASKPEATPTEQAPKPDLVSTSAQSKANPFSKNNNPFFKPTQTPTIDPKKAAAQRDSQRGLGSDDWSDSDDNSSDDDGPNRAGAARLASMLFGGMAPPPRAPTIEKEETGSKETAEVPPPTEVAPPPVPAAPPASVPPPISAASSKETDSDDEWGTPSAEAANDHDDFDFGNNFEPSMAPSPPPVPTQHIPEPVTDVPPIPQSIPPPPQSFAATVEDAPPPPPIPSQVPPPPPPPPSLFPTESSNAPPAPPPPPPPSAPSAVPPPPPMAPAAPPSAPAPSPGGPPGGAPNIGALLGQITGGKSLKKVDDSQKRIADGATVGRVVD.

Residues Met1 to Tyr21 are compositionally biased toward polar residues. The interval Met1–Tyr67 is disordered. Positions Thr39–Gln63 are enriched in low complexity. Residues Asp117–Phe206 enclose the EH 1 domain. Positions Leu150–Ala185 constitute an EF-hand 1 domain. Disordered regions lie at residues Glu234–Pro285 and Gln297–Gln428. 2 stretches are compositionally biased toward polar residues: residues Pro245–Gln257 and Gln297–Leu384. Over residues Gln385–Gln398 the composition is skewed to low complexity. Residues Pro399–Thr423 are compositionally biased toward polar residues. The EH 2 domain maps to Glu480–His569. The region spanning Leu513–Arg548 is the EF-hand 2 domain. Disordered regions lie at residues Pro564–Ser629 and Arg861–Asp1440. The span at Ser573–Gly583 shows a compositional bias: polar residues. Residues Thr627–Ser686 are a coiled coil. Positions Glu867–Lys876 are enriched in basic and acidic residues. Positions Thr882–Thr914 are enriched in low complexity. Over residues Pro921–Asn984 the composition is skewed to basic and acidic residues. Positions Thr985–Ala994 are enriched in polar residues. Residues Pro1023–Tyr1032 show a composition bias toward acidic residues. Residues Glu1024–Glu1076 are a coiled coil. The span at Gln1038–Met1067 shows a compositional bias: basic and acidic residues. The span at Asn1068 to Pro1077 shows a compositional bias: acidic residues. Polar residues predominate over residues Ser1080–Glu1100. Positions Glu1101–Glu1112 are enriched in basic and acidic residues. A compositionally biased stretch (low complexity) spans Ser1140–Pro1155. Acidic residues predominate over residues Asp1180–Asp1192. Residues Thr1218–Ala1230 are compositionally biased toward basic and acidic residues. Pro residues-rich tracts occupy residues Val1232–Ile1255, Asp1311–Gln1324, Ala1333–Leu1353, and Pro1362–Gly1402. A WH2 domain is found at Asn1405–Val1422. A compositionally biased stretch (basic and acidic residues) spans Lys1420–Ala1430.

The protein belongs to the PAN1 family. Component of the PAN1 actin cytoskeleton-regulatory complex.

The protein resides in the cell membrane. It localises to the endosome membrane. It is found in the cytoplasm. The protein localises to the cytoskeleton. Its subcellular location is the actin patch. Its function is as follows. Component of the PAN1 actin cytoskeleton-regulatory complex required for the internalization of endosomes during actin-coupled endocytosis. The complex links the site of endocytosis to the cell membrane-associated actin cytoskeleton. Mediates uptake of external molecules and vacuolar degradation of plasma membrane proteins. Plays a role in the proper organization of the cell membrane-associated actin cytoskeleton and promotes its destabilization. This Meyerozyma guilliermondii (strain ATCC 6260 / CBS 566 / DSM 6381 / JCM 1539 / NBRC 10279 / NRRL Y-324) (Yeast) protein is Actin cytoskeleton-regulatory complex protein PAN1 (PAN1).